Here is a 331-residue protein sequence, read N- to C-terminus: Ribose-phosphate pyrophosphokinase (331 aa).

Residue 55 to 57 (DGE) participates in ATP binding. 2 residues coordinate Mg(2+): His148 and Asp187. The active site involves Lys211. D-ribose 5-phosphate-binding positions include Arg213, Asp237, and 241 to 245 (DTGGT).

The protein belongs to the ribose-phosphate pyrophosphokinase family. Class I subfamily. In terms of assembly, homohexamer. It depends on Mg(2+) as a cofactor.

The protein resides in the cytoplasm. It catalyses the reaction D-ribose 5-phosphate + ATP = 5-phospho-alpha-D-ribose 1-diphosphate + AMP + H(+). It functions in the pathway metabolic intermediate biosynthesis; 5-phospho-alpha-D-ribose 1-diphosphate biosynthesis; 5-phospho-alpha-D-ribose 1-diphosphate from D-ribose 5-phosphate (route I): step 1/1. Involved in the biosynthesis of the central metabolite phospho-alpha-D-ribosyl-1-pyrophosphate (PRPP) via the transfer of pyrophosphoryl group from ATP to 1-hydroxyl of ribose-5-phosphate (Rib-5-P). This Parasynechococcus marenigrum (strain WH8102) protein is Ribose-phosphate pyrophosphokinase.